A 159-amino-acid polypeptide reads, in one-letter code: Nanos homolog 3 (159 aa).

Residues 42–87 (QEMQSDADSDEQAAALLESPSGPIRSRDSPEQNTSPGGGKPKSSPA) form a disordered region. The Nanos-type zinc-finger motif lies at 91–145 (FCSFCKHNGETEAVYTSHYLKNRDGDVMCPYLRQYKCPLCGATGAKAHTKRFCPM). Residues cysteine 92, cysteine 95, histidine 108, cysteine 119, cysteine 127, cysteine 130, histidine 138, and cysteine 143 each contribute to the Zn(2+) site. 2 consecutive short sequence motifs (C2HC) follow at residues 92-119 (CSFC…DVMC) and 127-143 (CPLC…KRFC). The interval 92–159 (CSFCKHNGET…YCSVYAKSTW (68 aa)) is interaction with mylpfa.

Belongs to the nanos family. In terms of assembly, interacts (via C-terminus) with myosin mylpfa/mylz2; the interaction negatively regulates mylpfa phosphorylation. As to expression, in the embryo, displays early ubiquitous expression before being restricted to primordial germ cells in a 3'-UTR-dependent manner. Expressed in early stage germ cells in larval and adult ovaries.

It localises to the cytoplasm. The protein resides in the perinuclear region. Functionally, RNA-binding protein which binds to RNA with no sequence specificity. Probably represses translation of specific mRNAs. Essential for the development of primordial germ cells (PGCs) by ensuring their proper migration and survival but is not required for PGC specification. Also required to maintain oocyte production in the adult ovary. Negatively regulates phosphorylation of myosin mylpfa/mylz2. The chain is Nanos homolog 3 from Danio rerio (Zebrafish).